The primary structure comprises 459 residues: Cysteine--tRNA ligase (459 aa).

Position 28 (Cys-28) interacts with Zn(2+). Residues 30–40 (ITIYDLCHIGH) carry the 'HIGH' region motif. Zn(2+) is bound by residues Cys-209, His-234, and Glu-238. A 'KMSKS' region motif is present at residues 266 to 270 (KMSKS). Residue Lys-269 coordinates ATP.

It belongs to the class-I aminoacyl-tRNA synthetase family. Monomer. Zn(2+) serves as cofactor.

Its subcellular location is the cytoplasm. The catalysed reaction is tRNA(Cys) + L-cysteine + ATP = L-cysteinyl-tRNA(Cys) + AMP + diphosphate. This Shewanella denitrificans (strain OS217 / ATCC BAA-1090 / DSM 15013) protein is Cysteine--tRNA ligase.